The sequence spans 1374 residues: DNA-directed RNA polymerase subunit beta (1374 aa).

Belongs to the RNA polymerase beta chain family. The RNAP catalytic core consists of 2 alpha, 1 beta, 1 beta' and 1 omega subunit. When a sigma factor is associated with the core the holoenzyme is formed, which can initiate transcription.

The catalysed reaction is RNA(n) + a ribonucleoside 5'-triphosphate = RNA(n+1) + diphosphate. In terms of biological role, DNA-dependent RNA polymerase catalyzes the transcription of DNA into RNA using the four ribonucleoside triphosphates as substrates. This is DNA-directed RNA polymerase subunit beta from Acidovorax sp. (strain JS42).